The sequence spans 525 residues: G-protein regulator 1 (525 aa).

The GoLoco domain occupies 424–445 (PVDMMDLIFSMSSRMDDQRTEL). A disordered region spans residues 488–525 (HTMNRILKRSKKSKSSLDSTNSMQGDDTRSDDVTMTSK).

In terms of assembly, interacts with gpr-1, lin-5 and GDP-bound goa-1.

Its subcellular location is the cytoplasm. The protein resides in the cell cortex. It is found in the cytoskeleton. It localises to the spindle. In terms of biological role, in the 1-cell embryo, probably together with gpr-2, controls nuclear rotation and spindle elongation during mitosis. Complex of gpr-1 and gpr-2, in association with lin-5, activates G-protein signaling to affect mitotic spindle force. Polarity determinants (par genes) may regulate lin-5/gpr-1/gpr-2/goa-1 locally to create the asymmetric forces that drive spindle movement. The sequence is that of G-protein regulator 1 (gpr-1) from Caenorhabditis elegans.